A 391-amino-acid chain; its full sequence is Probable methanogen homoaconitase large subunit (391 aa).

[4Fe-4S] cluster is bound by residues Cys275, Cys333, and Cys336.

The protein belongs to the aconitase/IPM isomerase family. LeuC type 2 subfamily. In terms of assembly, heterotetramer of 2 HacA and 2 HacB proteins.

It catalyses the reaction (2R)-homocitrate = (2R,3S)-homoisocitrate. The catalysed reaction is (2R)-homocitrate = cis-homoaconitate + H2O. The enzyme catalyses (2R,3S)-homoisocitrate = cis-homoaconitate + H2O. It carries out the reaction cis-(homo)2aconitate + H2O = (2R,3S)-iso(homo)2citrate. It catalyses the reaction cis-(homo)3aconitate + H2O = (2R,3S)-iso(homo)3citrate. Its pathway is organic acid metabolism; 2-oxosuberate biosynthesis. Component of a hydro-lyase with broad substrate specificity for cis-unsaturated tricarboxylic acids. Catalyzes both the reversible dehydration of (R)-homocitrate ((R)-2-hydroxybutane-1,2,4-tricarboxylate) to produce cis-homoaconitate ((Z)-but-1-ene-1,2,4-tricarboxylate), and its hydration to homoisocitrate ((1R,2S)-1-hydroxybutane-1,2,4-tricarboxylate). Is also able to hydrate the analogous longer chain substrates cis-homo(2)-aconitate, cis-homo(3)-aconitate. These reactions are part of the biosynthesis pathway of coenzyme B. The polypeptide is Probable methanogen homoaconitase large subunit (hacA) (Methanosarcina mazei (strain ATCC BAA-159 / DSM 3647 / Goe1 / Go1 / JCM 11833 / OCM 88) (Methanosarcina frisia)).